Here is a 240-residue protein sequence, read N- to C-terminus: Ribonuclease HII (240 aa).

Residues 29 to 220 (EPIAGVDEAG…VRRAAGLEPL (192 aa)) form the RNase H type-2 domain. Positions 35, 36, and 129 each coordinate a divalent metal cation.

The protein belongs to the RNase HII family. Requires Mn(2+) as cofactor. Mg(2+) is required as a cofactor.

Its subcellular location is the cytoplasm. It carries out the reaction Endonucleolytic cleavage to 5'-phosphomonoester.. Endonuclease that specifically degrades the RNA of RNA-DNA hybrids. The protein is Ribonuclease HII of Nocardioides sp. (strain ATCC BAA-499 / JS614).